Here is a 214-residue protein sequence, read N- to C-terminus: Probable transaldolase (214 aa).

The active-site Schiff-base intermediate with substrate is the K83.

This sequence belongs to the transaldolase family. Type 3B subfamily.

It is found in the cytoplasm. It catalyses the reaction D-sedoheptulose 7-phosphate + D-glyceraldehyde 3-phosphate = D-erythrose 4-phosphate + beta-D-fructose 6-phosphate. Its pathway is carbohydrate degradation; pentose phosphate pathway; D-glyceraldehyde 3-phosphate and beta-D-fructose 6-phosphate from D-ribose 5-phosphate and D-xylulose 5-phosphate (non-oxidative stage): step 2/3. In terms of biological role, transaldolase is important for the balance of metabolites in the pentose-phosphate pathway. This is Probable transaldolase (tal) from Streptococcus pyogenes serotype M1.